The sequence spans 203 residues: Glycerol-3-phosphate acyltransferase (203 aa).

Transmembrane regions (helical) follow at residues 4 to 24 (IAYL…AVIF), 56 to 76 (LGVL…GFYL), 80 to 100 (ISVI…PVFF), 115 to 135 (IIPM…FVFL), and 149 to 169 (LIVP…VALV).

The protein belongs to the PlsY family. Probably interacts with PlsX.

The protein resides in the cell inner membrane. The catalysed reaction is an acyl phosphate + sn-glycerol 3-phosphate = a 1-acyl-sn-glycero-3-phosphate + phosphate. It participates in lipid metabolism; phospholipid metabolism. Catalyzes the transfer of an acyl group from acyl-phosphate (acyl-PO(4)) to glycerol-3-phosphate (G3P) to form lysophosphatidic acid (LPA). This enzyme utilizes acyl-phosphate as fatty acyl donor, but not acyl-CoA or acyl-ACP. The polypeptide is Glycerol-3-phosphate acyltransferase (Glaesserella parasuis serovar 5 (strain SH0165) (Haemophilus parasuis)).